Consider the following 144-residue polypeptide: Maximins 11/H11 (144 aa).

The first 18 residues, 1–18, serve as a signal peptide directing secretion; the sequence is MNFKYIVAVSFLIASAYA. The propeptide occupies 19-43; sequence RSEENDEQSLSQRDVLEEESLREIR. Asn-70 is subject to Asparagine amide. A propeptide spanning residues 74-123 is cleaved from the precursor; that stretch reads TAEDHEVMKRLEAVMRDLDSLDYPEEASERETRGFNQEEIANLFTKKEKR. Ile-143 is subject to Isoleucine amide.

The protein belongs to the bombinin family. As to expression, expressed by the skin glands.

It is found in the secreted. Maximin-11 shows antimicrobial activity against bacteria and against the fungus C.albicans. It has little hemolytic activity. In terms of biological role, maximin-H11 shows antimicrobial activity against bacteria and against the fungus C.albicans. Shows strong hemolytic activity. This is Maximins 11/H11 from Bombina maxima (Giant fire-bellied toad).